The chain runs to 217 residues: Zinc finger CCHC-type and RNA-binding motif-containing protein 1 (217 aa).

Positions 10–88 (STVYVSNLPF…RVIKASIAID (79 aa)) constitute an RRM domain. The CCHC-type zinc-finger motif lies at 105–122 (SKCYECGESGHLSYACPK). The tract at residues 120-217 (CPKNMLGERE…YFSDEEELSD (98 aa)) is disordered. The segment covering 145 to 163 (PEEEIEEVEESEDEGEDPA) has biased composition (acidic residues). 3 positions are modified to phosphoserine: S155, S210, and S216.

As to quaternary structure, component of the U11/U12 snRNPs that are part of the U12-type spliceosome. Interacts with ZRSR1.

It localises to the nucleus. The protein localises to the nucleoplasm. This chain is Zinc finger CCHC-type and RNA-binding motif-containing protein 1 (ZCRB1), found in Bos taurus (Bovine).